We begin with the raw amino-acid sequence, 690 residues long: Eukaryotic translation initiation factor 3 subunit B (690 aa).

The segment covering 1-11 has biased composition (basic and acidic residues); that stretch reads MAKKKSEEHSG. Positions 1–36 are disordered; that stretch reads MAKKKSEEHSGADANDSDYQEEPNFEDPPGFVDNIS. Residues 15 to 25 show a composition bias toward acidic residues; that stretch reads NDSDYQEEPNF. Positions 57 to 141 constitute an RRM domain; sequence SVVVVDNIPK…HTFAVNLFTD (85 aa). 5 WD repeats span residues 207–246, 293–331, 334–369, 442–484, and 530–575; these read TRER…KIQK, DGMS…LLDL, IKIP…TLME, EIRE…KPSL, and PDHF…IKRT. The stretch at 595–645 forms a coiled coil; it reads EEKQKEIKKNLKKYYAAFEQKDRLRLTRASKELLEKRSQLRETFMEYRNKR.

Belongs to the eIF-3 subunit B family. As to quaternary structure, component of the eukaryotic translation initiation factor 3 (eIF-3) complex. The eIF-3 complex interacts with pix. Interacts with mxt.

The protein resides in the cytoplasm. Its function is as follows. RNA-binding component of the eukaryotic translation initiation factor 3 (eIF-3) complex, which is involved in protein synthesis of a specialized repertoire of mRNAs and, together with other initiation factors, stimulates binding of mRNA and methionyl-tRNAi to the 40S ribosome. The eIF-3 complex specifically targets and initiates translation of a subset of mRNAs involved in cell proliferation. The protein is Eukaryotic translation initiation factor 3 subunit B of Drosophila simulans (Fruit fly).